Consider the following 163-residue polypeptide: Probable ribosome biogenesis protein RLP24 (163 aa).

It belongs to the eukaryotic ribosomal protein eL24 family. Associated with nucleolar and cytoplasmic pre-60S particles. At the end of biogenesis it dissociates from cytoplasmic pre-60S particles and is likely to be exchanged for its ribosomal homolog, RPL24.

It is found in the nucleus. The protein localises to the nucleolus. Involved in the biogenesis of the 60S ribosomal subunit. Ensures the docking of GTPBP4/NOG1 to pre-60S particles. The chain is Probable ribosome biogenesis protein RLP24 (RSL24D1) from Pongo abelii (Sumatran orangutan).